The following is a 418-amino-acid chain: Protein fuzzy homolog (418 aa).

It belongs to the fuzzy family. As to quaternary structure, component of the CPLANE (ciliogenesis and planar polarity effectors) complex, composed of INTU, FUZ and WDPCP. Interacts with CPLANE2. Interacts with CPLANE1.

Its subcellular location is the cytoplasm. The protein resides in the cytoskeleton. The protein localises to the cilium basal body. Functionally, probable planar cell polarity effector involved in cilium biogenesis. May regulate protein and membrane transport to the cilium. Proposed to function as core component of the CPLANE (ciliogenesis and planar polarity effectors) complex involved in the recruitment of peripheral IFT-A proteins to basal bodies. May regulate the morphogenesis of hair follicles which depends on functional primary cilia. Binds phosphatidylinositol 3-phosphate with highest affinity, followed by phosphatidylinositol 4-phosphate and phosphatidylinositol 5-phosphate. The polypeptide is Protein fuzzy homolog (FUZ) (Homo sapiens (Human)).